The chain runs to 270 residues: Chymotrypsin-like elastase family member 3A (270 aa).

A signal peptide (or 16) is located at residues 1–15 (MMLRLLSSLLLVAVA). The propeptide at 16–28 (SGYGPPSSHSSSR) is activation peptide. In terms of domain architecture, Peptidase S1 spans 29 to 268 (VVHGEDAVPY…FIDWIEETIA (240 aa)). Residues Cys-58 and Cys-74 are joined by a disulfide bond. Residue His-73 is the Charge relay system of the active site. An N-linked (GlcNAc...) asparagine glycan is attached at Asn-114. A disulfide bridge connects residues Cys-117 and Cys-120. The active-site Charge relay system is the Asp-123. 3 disulfides stabilise this stretch: Cys-157–Cys-223, Cys-188–Cys-204, and Cys-213–Cys-244. Ser-217 functions as the Charge relay system in the catalytic mechanism.

Belongs to the peptidase S1 family. Elastase subfamily.

It carries out the reaction Preferential cleavage: Ala-|-Xaa. Does not hydrolyze elastin.. In terms of biological role, efficient protease with alanine specificity but only little elastolytic activity. The polypeptide is Chymotrypsin-like elastase family member 3A (CELA3A) (Homo sapiens (Human)).